Here is a 2017-residue protein sequence, read N- to C-terminus: Rootletin (2017 aa).

Coiled coils occupy residues 70–262 and 318–444; these read ATEM…KVTN and ERDL…LETE. A compositionally biased stretch (polar residues) spans 464–483; sequence SESGVQLSGSERTADASNGS. Residues 464–518 form a disordered region; sequence SESGVQLSGSERTADASNGSLRGLSGQRTPSPPRRSSPGRGRSPRRGPSPACSDS. The span at 499–513 shows a compositional bias: low complexity; the sequence is SSPGRGRSPRRGPSP. Coiled coils occupy residues 546–1058 and 1091–1438; these read QDLL…LAES and EMER…GLRS. 2 disordered regions span residues 1184-1226 and 1443-1575; these read LRES…RSAV and GLGL…GRLS. S1460, S1470, S1476, S1483, S1486, S1490, and S1496 each carry phosphoserine. Residues 1505–1704 adopt a coiled-coil conformation; it reads EAVRGALREF…DSEVKAGTLQ (200 aa). Residues 1510 to 1529 are compositionally biased toward basic and acidic residues; it reads ALREFLQELRSAQRERDELR. Residues S1575 and S1660 each carry the phosphoserine modification. The interval 1962–2017 is disordered; that stretch reads RSAQAQTERTLEARERAHRQRVRGLEEQVSTLKGQLQQELRRSSAPFSPPSGPPEK. Residues 1989-1999 show a composition bias toward polar residues; that stretch reads QVSTLKGQLQQ. The span at 2008 to 2017 shows a compositional bias: pro residues; the sequence is FSPPSGPPEK.

It belongs to the rootletin family. As to quaternary structure, homomer. Interacts with KLC3, NEK2 and the N-terminus of CEP250. Interacts with CEP44. Interacts with CCDC102B (via N-terminus). Post-translationally, phosphorylated by NEK2 which may regulate its association with centrosomes.

The protein resides in the cytoplasm. The protein localises to the cytoskeleton. Its subcellular location is the microtubule organizing center. It localises to the centrosome. It is found in the centriole. The protein resides in the cilium basal body. Functionally, major structural component of the ciliary rootlet, a cytoskeletal-like structure in ciliated cells which originates from the basal body at the proximal end of a cilium and extends proximally toward the cell nucleus. Furthermore, is required for the correct positioning of the cilium basal body relative to the cell nucleus, to allow for ciliogenesis. Contributes to centrosome cohesion before mitosis. The polypeptide is Rootletin (Homo sapiens (Human)).